We begin with the raw amino-acid sequence, 1148 residues long: Trafficking protein particle complex subunit 9 (1148 aa).

Ser-566 and Ser-953 each carry phosphoserine.

Belongs to the NIBP family. Component of the multisubunit TRAPP (transport protein particle) complex, which includes at least TRAPPC2, TRAPPC2L, TRAPPC3, TRAPPC3L, TRAPPC4, TRAPPC5, TRAPPC8, TRAPPC9, TRAPPC10, TRAPPC11 and TRAPPC12. Directly interacts with IKBKB and MAP3K14. Expressed at high levels in muscle and kidney and to a lower extent in brain, heart and placenta.

Its subcellular location is the golgi apparatus. It localises to the cis-Golgi network. The protein localises to the endoplasmic reticulum. The protein resides in the cytoplasm. Its function is as follows. Functions as an activator of NF-kappa-B through increased phosphorylation of the IKK complex. May function in neuronal cells differentiation. May play a role in vesicular transport from endoplasmic reticulum to Golgi. This is Trafficking protein particle complex subunit 9 (TRAPPC9) from Homo sapiens (Human).